Consider the following 337-residue polypeptide: UPF0284 protein AF_0276 (337 aa).

The protein belongs to the UPF0284 family.

In Archaeoglobus fulgidus (strain ATCC 49558 / DSM 4304 / JCM 9628 / NBRC 100126 / VC-16), this protein is UPF0284 protein AF_0276.